The chain runs to 2754 residues: Neurobeachin-like protein 2 (2754 aa).

Disordered regions lie at residues 1298-1338 (TAGS…SEAP) and 1364-1438 (SVGS…QQTS). 2 stretches are compositionally biased toward pro residues: residues 1301–1323 (SPPP…PPTE) and 1388–1400 (TPSP…PFPA). The span at 1425–1437 (GDDTSNTSNPQQT) shows a compositional bias: polar residues. Serine 1647 is modified (phosphoserine). Threonine 1867 is subject to Phosphothreonine. The BEACH-type PH domain occupies 1915–2040 (EQREKLVLSA…VRNQVYSWLL (126 aa)). The BEACH domain maps to 2053-2345 (RSPQEMLRAS…QLLKEPHPTR (293 aa)). 7 WD repeats span residues 2386–2424 (LVLA…SWLP), 2448–2491 (RLLS…ALPR), 2494–2531 (LLSQ…VWRL), 2544–2582 (KPVQ…IHTV), 2589–2631 (AALR…TYSL), 2639–2674 (KLRA…ILQL), and 2682–2717 (PPLP…VVAG). Residues serine 2739 and serine 2742 each carry the phosphoserine modification.

This sequence belongs to the WD repeat neurobeachin family. As to expression, expressed in megakaryocytes.

The protein resides in the endoplasmic reticulum. In terms of biological role, probably involved in thrombopoiesis. Plays a role in the development or secretion of alpha-granules, that contain several growth factors important for platelet biogenesis. The sequence is that of Neurobeachin-like protein 2 (NBEAL2) from Homo sapiens (Human).